The following is an 82-amino-acid chain: MVKIRLSRFGSTHNPHYRIVVTDSRRPRDGGYIENLGHYDPRKTTENYLKINAERAAYWLSVGAQPTQTARRLLKAQGVKVA.

It belongs to the bacterial ribosomal protein bS16 family.

The polypeptide is Small ribosomal subunit protein bS16 (Deinococcus geothermalis (strain DSM 11300 / CIP 105573 / AG-3a)).